The primary structure comprises 445 residues: MTELRQRVAHEPVAPPEDKESESEAKVDGETASDSESRAESAPLPVSADDTPEVLNRALSNLSSRWKNWWVRGILTLAMIAFFFIIIYLGPMVLMIIVMCVQIKCFHEIITIGYNVYHSYDLPWFRTLSWYFLLCVNYFFYGETVTDYFFTLVQREEPLRILSKYHRFISFTLYLIGFCMFVLSLVKKHYRLQFYMFGWTHVTLLIVVTQSHLVIHNLFEGMIWFIVPISCVICNDIMAYMFGFFFGRTPLIKLSPKKTWEGFIGGFFATVVFGLLLSYVMSGYRCFVCPVEYNNDTNSFTVDCEPSDLFRLQEYNIPGVIQSVIGWKTVRMYPFQIHSIALSTFASLIGPFGGFFASGFKRAFKIKDFANTIPGHGGIMDRFDCQYLMATFVNVYIASFIRGPNPSKLIQQFLTLRPDQQLHIFNTLRSHLIDKGMLTSTTEDE.

Residues 1–39 (MTELRQRVAHEPVAPPEDKESESEAKVDGETASDSESRA) are compositionally biased toward basic and acidic residues. The interval 1–49 (MTELRQRVAHEPVAPPEDKESESEAKVDGETASDSESRAESAPLPVSAD) is disordered. The residue at position 21 (serine 21) is a Phosphoserine. Threonine 31 is subject to Phosphothreonine. Phosphoserine is present on residues serine 33, serine 35, and serine 37. Residue threonine 51 is modified to Phosphothreonine. Transmembrane regions (helical) follow at residues 79–99 (MIAF…IIVM), 132–152 (FLLC…FFTL), 166–186 (HRFI…LSLV), 213–233 (LVIH…SCVI), 262–282 (GFIG…YVMS), and 340–360 (IALS…ASGF).

Belongs to the CDS family. As to quaternary structure, homodimer. Widely expressed. Expressed in heart, brain and retina, and to a lesser extent in placenta, lung, liver, skeletal muscle, kidney and pancreas.

Its subcellular location is the endoplasmic reticulum membrane. It carries out the reaction a 1,2-diacyl-sn-glycero-3-phosphate + CTP + H(+) = a CDP-1,2-diacyl-sn-glycerol + diphosphate. The enzyme catalyses 1-octadecanoyl-2-(5Z,8Z,11Z,14Z-eicosatetraenoyl)-sn-glycero-3-phosphate + CTP + H(+) = 1-octadecanoyl-2-(5Z,8Z,11Z,14Z-eicosatetraenoyl)-sn-glycero-3-cytidine-5'-diphosphate + diphosphate. The catalysed reaction is 1-octadecanoyl-2-(9Z,12Z-octadecadienoyl)-sn-glycero-3-phosphate + CTP + H(+) = 1-octadecanoyl-2-(9Z,12Z-octadecadienoyl)-sn-glycero-3-cytidine-5'-diphosphate + diphosphate. It catalyses the reaction 1-hexadecanoyl-2-(5Z,8Z,11Z,14Z-eicosatetraenoyl)-sn-glycero-3-phosphate + CTP + H(+) = 1-hexadecanoyl-2-(5Z,8Z,11Z,14Z-eicosatetraenoyl)-sn-glycero-3-cytidine-5'-diphosphate + diphosphate. It carries out the reaction 1,2-di-(5Z,8Z,11Z,14Z)-eicosatetraenoyl-sn-glycero-3-phosphate + CTP + H(+) = 1,2-di-(5Z,8Z,11Z,14Z-eicosatetraenoyl)-sn-glycero-3-cytidine-5'-diphosphate + diphosphate. The enzyme catalyses 1-octadecanoyl-2-(9Z-octadecenoyl)-sn-glycero-3-phosphate + CTP + H(+) = 1-octadecanoyl-2-(9Z-octadecenoyl)-sn-glycero-3-cytidine-5'-diphosphate + diphosphate. The catalysed reaction is 1-octadecanoyl-2-(4Z,7Z,10Z,13Z,16Z,19Z-docosahexaenoyl)-sn-glycero-3-phosphate + CTP + H(+) = 1-octadecanoyl-2-(4Z,7Z,10Z,13Z,16Z,19Z-docosahexaenoyl)-sn-glycero-3-cytidine-5'-diphosphate + diphosphate. It catalyses the reaction 1,2-di-(9Z,12Z-octadecadienoyl)-sn-glycero-3-phosphate + CTP + H(+) = 1,2-di-(9Z,12Z-octadecadienoyl)-sn-glycero-3-cytidine-5'-diphosphate + diphosphate. It carries out the reaction 1,2-di-(9Z-octadecenoyl)-sn-glycero-3-phosphate + CTP + H(+) = 1,2-di-(9Z-octadecenoyl)-sn-glycero-3-cytidine-5'-diphosphate + diphosphate. It functions in the pathway phospholipid metabolism; CDP-diacylglycerol biosynthesis; CDP-diacylglycerol from sn-glycerol 3-phosphate: step 3/3. Its activity is regulated as follows. Inhibited by its anionic phospholipid end products, with phosphatidylinositol-(4,5)- bisphosphate (PIP2) showing the strongest inhibition. Inhibition is also acyl chain specific, with 1-stearoyl-2-arachidonoyl-snphosphatidylinositol showing the strongest inhibition. In terms of biological role, catalyzes the conversion of phosphatidic acid (PA) to CDP-diacylglycerol (CDP-DAG), an essential intermediate in the synthesis of phosphatidylglycerol, cardiolipin and phosphatidylinositol. Exhibits specificity for the nature of the acyl chains at the sn-1 and sn-2 positions in the substrate, PA and the preferred acyl chain composition is 1-stearoyl-2-arachidonoyl-sn-phosphatidic acid. Plays an important role in regulating the growth and maturation of lipid droplets which are storage organelles at the center of lipid and energy homeostasis. The sequence is that of Phosphatidate cytidylyltransferase 2 from Homo sapiens (Human).